Consider the following 148-residue polypeptide: 3-dehydroquinate dehydratase (148 aa).

The Proton acceptor role is filled by Tyr-26. Substrate-binding residues include Asn-75, His-81, and Asp-88. Residue His-101 is the Proton donor of the active site. Substrate contacts are provided by residues 102–103 and Arg-112; that span reads LS.

It belongs to the type-II 3-dehydroquinase family. In terms of assembly, homododecamer.

The catalysed reaction is 3-dehydroquinate = 3-dehydroshikimate + H2O. It participates in metabolic intermediate biosynthesis; chorismate biosynthesis; chorismate from D-erythrose 4-phosphate and phosphoenolpyruvate: step 3/7. In terms of biological role, catalyzes a trans-dehydration via an enolate intermediate. The protein is 3-dehydroquinate dehydratase of Shewanella frigidimarina (strain NCIMB 400).